We begin with the raw amino-acid sequence, 198 residues long: Carnitine operon protein CaiE (198 aa).

A disordered region spans residues 179 to 198 (VEENRPRLKGTTDVKPKSAQ). Positions 180–198 (EENRPRLKGTTDVKPKSAQ) are enriched in basic and acidic residues.

Belongs to the transferase hexapeptide repeat family.

It participates in amine and polyamine metabolism; carnitine metabolism. Overproduction of CaiE stimulates the activity of CaiB and CaiD. The protein is Carnitine operon protein CaiE of Salmonella choleraesuis (strain SC-B67).